A 328-amino-acid polypeptide reads, in one-letter code: Lipoate--protein ligase 1 (328 aa).

A BPL/LPL catalytic domain is found at 27–214; the sequence is PAEESYFLFY…TIFGETEVEE (188 aa). Residues arginine 69, 74–77, and lysine 131 contribute to the ATP site; that span reads GAVY. Lysine 131 serves as a coordination point for (R)-lipoate.

The enzyme catalyses L-lysyl-[lipoyl-carrier protein] + (R)-lipoate + ATP = N(6)-[(R)-lipoyl]-L-lysyl-[lipoyl-carrier protein] + AMP + diphosphate + H(+). The protein operates within protein modification; protein lipoylation via exogenous pathway; protein N(6)-(lipoyl)lysine from lipoate: step 1/2. It functions in the pathway protein modification; protein lipoylation via exogenous pathway; protein N(6)-(lipoyl)lysine from lipoate: step 2/2. Functionally, catalyzes the lipoylation of proteins, such as GcvH (SAV0833) and GcvH-L (SAV0324), likely via the ATP-dependent activation of lipoate to lipoyl-AMP and the transfer of the activated lipoyl onto the lipoyl domain of the target protein. The protein is Lipoate--protein ligase 1 of Staphylococcus aureus (strain Mu50 / ATCC 700699).